A 136-amino-acid polypeptide reads, in one-letter code: Ribosome-binding factor A (136 aa).

The tract at residues 114–136 is disordered; that stretch reads DRANRPGPAADEPDEPDEPEDRR. The span at 124-136 shows a compositional bias: acidic residues; that stretch reads DEPDEPDEPEDRR.

The protein belongs to the RbfA family. Monomer. Binds 30S ribosomal subunits, but not 50S ribosomal subunits or 70S ribosomes.

It localises to the cytoplasm. One of several proteins that assist in the late maturation steps of the functional core of the 30S ribosomal subunit. Associates with free 30S ribosomal subunits (but not with 30S subunits that are part of 70S ribosomes or polysomes). Required for efficient processing of 16S rRNA. May interact with the 5'-terminal helix region of 16S rRNA. The chain is Ribosome-binding factor A from Bordetella petrii (strain ATCC BAA-461 / DSM 12804 / CCUG 43448).